The sequence spans 158 residues: Phosphopantetheine adenylyltransferase (158 aa).

Thr-10 provides a ligand contact to substrate. ATP is bound by residues 10-11 and His-18; that span reads TF. Substrate is bound by residues Lys-42, Leu-74, and Arg-88. Residues 89-91, Glu-99, and 124-130 each bind ATP; these read GLR and NSFISST.

This sequence belongs to the bacterial CoaD family. Homohexamer. Requires Mg(2+) as cofactor.

The protein localises to the cytoplasm. It catalyses the reaction (R)-4'-phosphopantetheine + ATP + H(+) = 3'-dephospho-CoA + diphosphate. It functions in the pathway cofactor biosynthesis; coenzyme A biosynthesis; CoA from (R)-pantothenate: step 4/5. Functionally, reversibly transfers an adenylyl group from ATP to 4'-phosphopantetheine, yielding dephospho-CoA (dPCoA) and pyrophosphate. This is Phosphopantetheine adenylyltransferase from Shewanella woodyi (strain ATCC 51908 / MS32).